The primary structure comprises 1012 residues: Alanine--tRNA ligase, mitochondrial (1012 aa).

The transit peptide at M1–H24 directs the protein to the mitochondrion. Zn(2+)-binding residues include H656, H660, C766, and H770.

It belongs to the class-II aminoacyl-tRNA synthetase family. As to quaternary structure, monomer. Zn(2+) is required as a cofactor.

Its subcellular location is the mitochondrion. It carries out the reaction tRNA(Ala) + L-alanine + ATP = L-alanyl-tRNA(Ala) + AMP + diphosphate. In terms of biological role, catalyzes the attachment of alanine to tRNA(Ala) in a two-step reaction: alanine is first activated by ATP to form Ala-AMP and then transferred to the acceptor end of tRNA(Ala). Also edits incorrectly charged tRNA(Ala) via its editing domain. The sequence is that of Alanine--tRNA ligase, mitochondrial from Drosophila melanogaster (Fruit fly).